The chain runs to 123 residues: Small ribosomal subunit protein uS11 (123 aa).

Belongs to the universal ribosomal protein uS11 family. In terms of assembly, part of the 30S ribosomal subunit. Interacts with proteins S7 and S18. Binds to IF-3.

Its function is as follows. Located on the platform of the 30S subunit, it bridges several disparate RNA helices of the 16S rRNA. Forms part of the Shine-Dalgarno cleft in the 70S ribosome. The polypeptide is Small ribosomal subunit protein uS11 (Coxiella burnetii (strain CbuG_Q212) (Coxiella burnetii (strain Q212))).